The sequence spans 371 residues: Jasmonate-induced oxygenase 2 (371 aa).

Positions 219 to 320 (NIGACLRVNY…RVSLAFFYNP (102 aa)) constitute a Fe2OG dioxygenase domain. Arg225 is a binding site for jasmonate. 2 residues coordinate 2-oxoglutarate: Asn227 and Tyr229. Residues His244, Asp246, and His301 each coordinate Fe cation. The 2-oxoglutarate site is built by Arg311 and Ser313. Positions 350 and 354 each coordinate jasmonate.

Belongs to the iron/ascorbate-dependent oxidoreductase family. It depends on L-ascorbate as a cofactor. Fe(2+) is required as a cofactor.

The catalysed reaction is jasmonate + 2-oxoglutarate + O2 = (1R,2R)-12-hydroxyjasmonate + succinate + CO2. Its function is as follows. 2-oxoglutarate-dependent dioxygenase involved in the oxidation of jasmonate (JA), a stress-induced phytohormone synthesized in response to attack by pathogens and herbivores, which triggers the activation of defense responses via the JA-mediated signaling pathway. Converts JA to 12-hydroxyjasmonate (12OH-JA), an inactive form of JA. Is specific to free JA, and cannot oxidize the bioactive form jasmonoyl-L-isoleucine (JA-Ile) or other JA-amino acid conjugates. Prevents over-accumulation of JA and indirectly its bioactive form JA-Ile under stress response. Acts as a negative regulator of JA-mediated defense signaling, by contributing to 12OH-JA accumulation, which represses JA defense responses upon infection by the fungal pathogen Botrytis cinerea. Acts as a negative regulator of JA-mediated defense responses upon infestation by the herbivorous caterpillar Mamestra brassicae. May be involved in the catabolism of cytotoxic polycyclic aromatic hydrocarbons (PAHs). This Arabidopsis thaliana (Mouse-ear cress) protein is Jasmonate-induced oxygenase 2.